A 291-amino-acid chain; its full sequence is Probable alpha-L-glutamate ligase (291 aa).

The ATP-grasp domain maps to 104-287 (HQLLASQGID…VAGTIIQHLE (184 aa)). Residues Lys-141, 178 to 179 (EF), Asp-187, and 211 to 213 (RSN) contribute to the ATP site. Mg(2+) is bound by residues Asp-248, Glu-260, and Asn-262. The Mn(2+) site is built by Asp-248, Glu-260, and Asn-262.

It belongs to the RimK family. Mg(2+) is required as a cofactor. Requires Mn(2+) as cofactor.

This is Probable alpha-L-glutamate ligase from Xanthomonas campestris pv. campestris (strain B100).